We begin with the raw amino-acid sequence, 352 residues long: S-adenosylmethionine:tRNA ribosyltransferase-isomerase (352 aa).

It belongs to the QueA family. In terms of assembly, monomer.

Its subcellular location is the cytoplasm. It catalyses the reaction 7-aminomethyl-7-carbaguanosine(34) in tRNA + S-adenosyl-L-methionine = epoxyqueuosine(34) in tRNA + adenine + L-methionine + 2 H(+). It functions in the pathway tRNA modification; tRNA-queuosine biosynthesis. Functionally, transfers and isomerizes the ribose moiety from AdoMet to the 7-aminomethyl group of 7-deazaguanine (preQ1-tRNA) to give epoxyqueuosine (oQ-tRNA). This is S-adenosylmethionine:tRNA ribosyltransferase-isomerase from Paraburkholderia phytofirmans (strain DSM 17436 / LMG 22146 / PsJN) (Burkholderia phytofirmans).